The chain runs to 1250 residues: MKAVLTCFRPVVASHRRYCANPGQAMKYLNVAEKNDAAKTIAGLLSNGAAQRREGYSVYNKVFDFEAPVRGQNAKMVMTSVSGHMMQLAFQVSYKNWRTVDPRSLFDAPVKKGVGSDYEPIKRTLEREVRGCQGLIIWTDCDREGENIGYEIIDVCRAIKPNISVYRATFSEITTVAVRRALQQLGQPDKRQSDAVDVRTELDLRTGAAITRFQTMRLQRLFPEKIADKLISYGSCQIPTLGFVAERYKEIEAFVSEPFWKIKVLHTIDDLTVEFNWARNRLFDKEACENYLLLCLAEPDPRALVESVTVKPKHKWRPTPLDTVEMEKLGSRKLKLSAKETMTIAEKLYTKGFISYPRTETNQFSKEFALAPLVEMQTGHRDWGAFAQRVIEWGPNPRNGNKSDQAHPPIHPTKLAENLQGNEARVYELVVRHFLACVSKDAVGSETLVHIDIAGEKFTANGLVIHERNYLDVYVYDKWSAKQIHHYENGQRFEPTEVSLHEGATTAPPLLTEADLIALMEKHGIGTDATHAEHINTIKERGYIGVLDKGFLVPGVIGMGLYEGYDAMELALAKPQLRAEFELDLKLICQGQKDPKVVLTEQIAKYKQAYQQITDKITAMDAKISARINETPAANSAVQEGADGSAPSHGIIQSIFQCPKCNEAPLALKPKKNQQGWYIGCNNFPDCKNAVWLPTECKDASVLDECCPTCGDGYRMLKFRLSTPYYRGVFGTPSGWYKTCLPCDNLFRTTFNINLDSVKKVGGIVGEVRGGGGGPGPGPGGGGSGRGAGSGGWSSGPGGGGSGGGGGSGGWGSGTGGGGSGGWGSGTGGGGLGGGKGKKPGGESKKSATKKPPNEPKPKKTKEPKAAPNKKTSSKSSGSIRSFFTSAAPTNSASNGLDEFFDSNDGFEDAMLAAAESVESSSQPKTISMVPLDDDIAAAFAADDDAEFEALVNGGTMPTESNGDQQLDKSLSEWIKEQDKADERPMLWGTRERASLGTAAPTPPPKPAAKRPRWDSVERDSTPPSSVPESETVLCTGCQQPARQNTVRKNGPNLGRLYYKCPKPDECNFFQWADEPPSSAKSKNSTGSAPQSTTSWGSNRVVTLPSIQQSNSQRGQSSMRSNSSSTVTITQTKTKQQERNTATPGDGEEVMCNCGQLASQLTVRKDGPNQGRPFYACPTREKSCGFFKWGDEDQNQGASSTSWGSANRNPPGRSQPTAITSDGPKTRRCGLCRKEGHTRNKCPRKDEFDM.

In terms of domain architecture, Toprim spans 27 to 171 (KYLNVAEKND…NISVYRATFS (145 aa)). The Topo IA-type catalytic domain occupies 189-610 (DKRQSDAVDV…EQIAKYKQAY (422 aa)). The O-(5'-phospho-DNA)-tyrosine intermediate role is filled by Y356. Positions 769–835 (RGGGGGPGPG…GTGGGGLGGG (67 aa)) are enriched in gly residues. Disordered stretches follow at residues 769 to 899 (RGGG…GLDE) and 953 to 1035 (NGGT…TVLC). Residues 840-865 (PGGESKKSATKKPPNEPKPKKTKEPK) are compositionally biased toward basic and acidic residues. Over residues 866 to 886 (AAPNKKTSSKSSGSIRSFFTS) the composition is skewed to low complexity. The segment covering 956 to 965 (TMPTESNGDQ) has biased composition (polar residues). Composition is skewed to basic and acidic residues over residues 966–994 (QLDKSLSEWIKEQDKADERPMLWGTRERA) and 1012–1021 (PRWDSVERDS). Positions 1022–1033 (TPPSSVPESETV) are enriched in low complexity. 4 residues coordinate Zn(2+): C1035, C1038, C1061, and C1067. The GRF-type 1 zinc-finger motif lies at 1035–1076 (CTGCQQPARQNTVRKNGPNLGRLYYKCPKPDECNFFQWADEP). Positions 1069–1150 (FFQWADEPPS…TATPGDGEEV (82 aa)) are disordered. The span at 1079 to 1101 (SAKSKNSTGSAPQSTTSWGSNRV) shows a compositional bias: polar residues. Over residues 1106 to 1134 (SIQQSNSQRGQSSMRSNSSSTVTITQTKT) the composition is skewed to low complexity. Zn(2+) contacts are provided by C1152, C1154, C1177, and C1184. The segment at 1152-1193 (CNCGQLASQLTVRKDGPNQGRPFYACPTREKSCGFFKWGDED) adopts a GRF-type 2 zinc-finger fold. Residues 1188–1231 (KWGDEDQNQGASSTSWGSANRNPPGRSQPTAITSDGPKTRRCGL) are disordered. Positions 1195–1220 (NQGASSTSWGSANRNPPGRSQPTAIT) are enriched in polar residues.

Belongs to the type IA topoisomerase family.

The catalysed reaction is ATP-independent breakage of single-stranded DNA, followed by passage and rejoining.. Its function is as follows. Releases the supercoiling and torsional tension of DNA introduced during the DNA replication and transcription by transiently cleaving and rejoining one strand of the DNA duplex. Introduces a single-strand break via transesterification at a target site in duplex DNA. The scissile phosphodiester is attacked by the catalytic tyrosine of the enzyme, resulting in the formation of a DNA-(5'-phosphotyrosyl)-enzyme intermediate and the expulsion of a 3'-OH DNA strand. The free DNA strand than undergoes passage around the unbroken strand thus removing DNA supercoils. Finally, in the religation step, the DNA 3'-OH attacks the covalent intermediate to expel the active-site tyrosine and restore the DNA phosphodiester backbone. Weakly relaxes negative supercoils and displays a distinct preference for binding single-stranded DNA. The protein is DNA topoisomerase 3-alpha (Top3alpha) of Drosophila melanogaster (Fruit fly).